Consider the following 253-residue polypeptide: MITKRIIPCLDVDMGRVVKGVNFVNLKDVGDPVEIAEFYNKEGADEIVFLDISATHEGRATMIDVVRKTAEKLFIPLTVGGGIKNINDFRDILRAGADKISVNSSAIRNPKLIKKAAECFGSQCVVVAIDGKKRKDKDGWNVFINGGRIDTGLDAIEWARKVEKLGAGEILLTSMDADGTKEGYDLEFTNEVSKTVNIPVIASGGCGKLKHFGEILKKSSADAALAASLFHFKELSIEEVKNYLKKEGFSVRL.

Residues Asp-11 and Asp-130 contribute to the active site.

It belongs to the HisA/HisF family. Heterodimer of HisH and HisF.

It is found in the cytoplasm. The catalysed reaction is 5-[(5-phospho-1-deoxy-D-ribulos-1-ylimino)methylamino]-1-(5-phospho-beta-D-ribosyl)imidazole-4-carboxamide + L-glutamine = D-erythro-1-(imidazol-4-yl)glycerol 3-phosphate + 5-amino-1-(5-phospho-beta-D-ribosyl)imidazole-4-carboxamide + L-glutamate + H(+). The protein operates within amino-acid biosynthesis; L-histidine biosynthesis; L-histidine from 5-phospho-alpha-D-ribose 1-diphosphate: step 5/9. Functionally, IGPS catalyzes the conversion of PRFAR and glutamine to IGP, AICAR and glutamate. The HisF subunit catalyzes the cyclization activity that produces IGP and AICAR from PRFAR using the ammonia provided by the HisH subunit. This Clostridium botulinum (strain 657 / Type Ba4) protein is Imidazole glycerol phosphate synthase subunit HisF.